Reading from the N-terminus, the 1299-residue chain is MLDVNFFDELRIGLATADDIRQWSHGEVKKPETINYRTLKPEKDGLFCEKIFGPTRDWECYCGKYKRVRFKGIICERCGVEVTRAKVRRERMGHIELAAPVTHIWYFKGVPSRLGYLLDLAPKDLEKVIYFAAYMITYVDDERRTRDLPSLEAHVSVERQQIENRRDSDLEARAKKLETDLAELEAEGAKADVRRKVREGAEREMKQLRDRAQREIDRLDEVWTRFKNLKVQDLEGDELLYRELRDRFGTYFDGSMGAAALQKRLESFDLDEEAERLREIIRTGKGQKKTRALKRLKVVSAFLQTSNSPKGMVLDCVPVIPPDLRPMVQLDGGRFATSDLNDLYRRVINRNNRLKRLLDLGAPEIIVNNEKRMLQEAVDALFDNGRRGRPVTGPGNRPLKSLSDMLKGKQGRFRQNLLGKRVDYSARSVIVVGPQLKLHQCGLPKAMALELFKPFVMKRLVDLNHAQNIKSAKRMVERGRTVVYDVLEEVIAEHPVLLNRAPTLHRLGIQAFEPQLVEGKAIQIHPLVCTAFNADFDGDQMAVHLPLSAEAQAEARILMLSSNNILKPADGRPVTMPTQDMVLGLFFLTTDGALRNVKGEERSFASVAEAIMAFDAGELSLQSRVDIRFPVGTIPPRGWTPPAREEGEPEWQQGDTFRLRTTLGRALFNELLPEDYPFVDYEVGKKQLSEIVNDLAERYPKVIVAATLDNLKAAGFYWATRSGVTVAISDIVVPEAKKEIVKGYEAQDEKVQKQYERGLITKDERTQELIAIWTKATNEVAEAMNANFPKTNPIFMMVDSGARGNMMQMRQIAGMRGLVSNAKNETIPRPIKASFREGLSVLEYFISTHGARKGLADTALRTADSGYLTRRLVDVSQDVIIREEDCGTERGLKLKIAERGADGVLRKTDDVETSVYARMLAEDVVIDGKVIAPANVDLGDVLIDQLVHHGVEEVKTRSILTCESQVGTCAMCYGRSLATGKLVDIGEAVGIIAAQSIGEPGTQLTMRTFHTGGVAGDDITQGLPRVVELFEARTPKGVAPISEASGRVRIEETEKTKKIVVTPDDGSDETAFPISKRARVLVTEGEHVEVGQKLTVGATNPHDVLRILGQRAVQVHLVGEVQKVYNSQGVSIHDKHIEIIIRQMLRRVTIIESGDAELLPGELVERSKFETENRRVVQEGGHPASGRPQLMGITKASLATESWLSAASFQETTRVLTDAAINAKSDSLIGLKENVIIGKLIPAGTGLSRYRNIRVEPTEEAKAAMYSAVGYDDIDYSPFGTGSGQAVPLEDYDYGPYNQ.

4 residues coordinate Zn(2+): Cys60, Cys62, Cys75, and Cys78. A disordered region spans residues 385–405; sequence GRRGRPVTGPGNRPLKSLSDM. Residues Asp535, Asp537, and Asp539 each contribute to the Mg(2+) site. Zn(2+)-binding residues include Cys886, Cys962, Cys969, and Cys972.

This sequence belongs to the RNA polymerase beta' chain family. The RNAP catalytic core consists of 2 alpha, 1 beta, 1 beta' and 1 omega subunit. When a sigma factor is associated with the core the holoenzyme is formed, which can initiate transcription. Mg(2+) is required as a cofactor. Zn(2+) serves as cofactor.

The catalysed reaction is RNA(n) + a ribonucleoside 5'-triphosphate = RNA(n+1) + diphosphate. DNA-dependent RNA polymerase catalyzes the transcription of DNA into RNA using the four ribonucleoside triphosphates as substrates. The sequence is that of DNA-directed RNA polymerase subunit beta' from Streptomyces avermitilis (strain ATCC 31267 / DSM 46492 / JCM 5070 / NBRC 14893 / NCIMB 12804 / NRRL 8165 / MA-4680).